Here is an 862-residue protein sequence, read N- to C-terminus: Leucine--tRNA ligase (862 aa).

The short motif at 51 to 61 (PYPSGSLHMGH) is the 'HIGH' region element. A 'KMSKS' region motif is present at residues 624 to 628 (KMSKS). An ATP-binding site is contributed by Lys627.

Belongs to the class-I aminoacyl-tRNA synthetase family.

The protein localises to the cytoplasm. The catalysed reaction is tRNA(Leu) + L-leucine + ATP = L-leucyl-tRNA(Leu) + AMP + diphosphate. This Prochlorococcus marinus (strain NATL2A) protein is Leucine--tRNA ligase.